Consider the following 51-residue polypeptide: Large ribosomal subunit protein eL39 (51 aa).

The protein belongs to the eukaryotic ribosomal protein eL39 family. Component of the large ribosomal subunit. Interacts with IMPACT.

Its subcellular location is the cytoplasm. Its function is as follows. RNA-binding component of the large ribosomal subunit. The ribosome is a large ribonucleoprotein complex responsible for the synthesis of proteins in the cell. The chain is Large ribosomal subunit protein eL39 (Rpl39) from Mus musculus (Mouse).